The chain runs to 261 residues: Acetylglutamate kinase (261 aa).

Substrate-binding positions include 46–47 (GG), Arg-68, and Asn-160.

Belongs to the acetylglutamate kinase family. ArgB subfamily.

The protein localises to the cytoplasm. The catalysed reaction is N-acetyl-L-glutamate + ATP = N-acetyl-L-glutamyl 5-phosphate + ADP. It functions in the pathway amino-acid biosynthesis; L-arginine biosynthesis; N(2)-acetyl-L-ornithine from L-glutamate: step 2/4. Functionally, catalyzes the ATP-dependent phosphorylation of N-acetyl-L-glutamate. In Shewanella loihica (strain ATCC BAA-1088 / PV-4), this protein is Acetylglutamate kinase.